The chain runs to 92 residues: Small ribosomal subunit protein uS19 (92 aa).

The protein belongs to the universal ribosomal protein uS19 family.

Functionally, protein S19 forms a complex with S13 that binds strongly to the 16S ribosomal RNA. This is Small ribosomal subunit protein uS19 from Shewanella putrefaciens (strain CN-32 / ATCC BAA-453).